The sequence spans 165 residues: Probable chemoreceptor glutamine deamidase CheD (165 aa).

This sequence belongs to the CheD family.

It catalyses the reaction L-glutaminyl-[protein] + H2O = L-glutamyl-[protein] + NH4(+). Probably deamidates glutamine residues to glutamate on methyl-accepting chemotaxis receptors (MCPs), playing an important role in chemotaxis. The polypeptide is Probable chemoreceptor glutamine deamidase CheD (Clostridium tetani (strain Massachusetts / E88)).